A 400-amino-acid chain; its full sequence is CinA-like protein (400 aa).

This sequence belongs to the CinA family.

The polypeptide is CinA-like protein (Sulfurihydrogenibium sp. (strain YO3AOP1)).